Consider the following 367-residue polypeptide: MAPSGPGSSARRRCRRVLYWIPVVFITLLLGWSYYAYAIQLCIVSMENTGEQVVCLMAYHLLFAMFVWSYWKTIFTLPMNPSKEFHLSYAEKDLLEREPRGEAHQEVLRRAAKDLPIYTRTMSGAIRYCDRCQLIKPDRCHHCSVCDKCILKMDHHCPWVNNCVGFSNYKFFLLFLAYSLLYCLFIAATDLQYFIKFWTNGLPDTQAKFHIMFLFFAAAMFSVSLSSLFGYHCWLVSKNKSTLEAFRSPVFRHGTDKNGFSLGFSKNMRQVFGDEKKYWLLPIFSSLGDGCSFPTCLVNQDPEQASTPAGLNSTAKNLENHQFPAKPLRESQSHLLTDSQSWTESSINPGKCKAGMSNPALTMENET.

The Cytoplasmic portion of the chain corresponds to 1 to 16 (MAPSGPGSSARRRCRR). Residues 17–37 (VLYWIPVVFITLLLGWSYYAY) form a helical membrane-spanning segment. Topologically, residues 38 to 54 (AIQLCIVSMENTGEQVV) are lumenal. Residues 55 to 75 (CLMAYHLLFAMFVWSYWKTIF) form a helical membrane-spanning segment. The Cytoplasmic segment spans residues 76–170 (TLPMNPSKEF…NNCVGFSNYK (95 aa)). Positions 127-177 (RYCDRCQLIKPDRCHHCSVCDKCILKMDHHCPWVNNCVGFSNYKFFLLFLA) constitute a DHHC domain. Residue Cys-157 is the S-palmitoyl cysteine intermediate of the active site. Residues 171–191 (FFLLFLAYSLLYCLFIAATDL) traverse the membrane as a helical segment. Topologically, residues 192–208 (QYFIKFWTNGLPDTQAK) are lumenal. The helical transmembrane segment at 209–229 (FHIMFLFFAAAMFSVSLSSLF) threads the bilayer. Residues 230-367 (GYHCWLVSKN…NPALTMENET (138 aa)) lie on the Cytoplasmic side of the membrane. A mediates localization to plasma membrane and recycling endosomes region spans residues 299–367 (NQDPEQASTP…NPALTMENET (69 aa)). The tract at residues 330-367 (ESQSHLLTDSQSWTESSINPGKCKAGMSNPALTMENET) is disordered. Over residues 333-348 (SHLLTDSQSWTESSIN) the composition is skewed to polar residues. Residues 335-336 (LL) carry the Non-canonical dileucine endocytic signal motif. At Ser-341 the chain carries Phosphoserine. An NPxY-like endocytic signal motif is present at residues 358–361 (NPAL).

It belongs to the DHHC palmitoyltransferase family. In terms of assembly, monomer. Homodimer. The monomeric form has a higher catalytic activity. Autopalmitoylated. Ubiquitously expressed. Reduced expression in colorectal cancers with liver metastasis.

The protein localises to the postsynaptic density. The protein resides in the postsynaptic recycling endosome membrane. It is found in the cell membrane. Its subcellular location is the endoplasmic reticulum membrane. It localises to the golgi apparatus membrane. It carries out the reaction L-cysteinyl-[protein] + hexadecanoyl-CoA = S-hexadecanoyl-L-cysteinyl-[protein] + CoA. The catalysed reaction is L-cysteinyl-[protein] + tetradecanoyl-CoA = S-tetradecanoyl-L-cysteinyl-[protein] + CoA. It catalyses the reaction L-cysteinyl-[protein] + octadecanoyl-CoA = S-octadecanoyl-L-cysteinyl-[protein] + CoA. Palmitoyltransferase that catalyzes the addition of palmitate onto various protein substrates and is involved in a variety of cellular processes. Has no stringent fatty acid selectivity and in addition to palmitate can also transfer onto target proteins myristate from tetradecanoyl-CoA and stearate from octadecanoyl-CoA. In the nervous system, plays a role in long term synaptic potentiation by palmitoylating AKAP5 through which it regulates protein trafficking from the dendritic recycling endosomes to the plasma membrane and controls both structural and functional plasticity at excitatory synapses. In dendrites, mediates the palmitoylation of DLG4 when synaptic activity decreases and induces synaptic clustering of DLG4 and associated AMPA-type glutamate receptors. Also mediates the de novo and turnover palmitoylation of RGS7BP, a shuttle for Gi/o-specific GTPase-activating proteins/GAPs, promoting its localization to the plasma membrane in response to the activation of G protein-coupled receptors. Through the localization of these GTPase-activating proteins/GAPs, it also probably plays a role in G protein-coupled receptors signaling in neurons. Also probably plays a role in cell adhesion by palmitoylating CD9 and CD151 to regulate their expression and function. Palmitoylates the endoplasmic reticulum protein CKAP4 and regulates its localization to the plasma membrane. Could also palmitoylate LCK and regulate its localization to the plasma membrane. In terms of biological role, (Microbial infection) Promotes Chikungunya virus (CHIKV) replication by mediating viral nsp1 palmitoylation. The chain is Palmitoyltransferase ZDHHC2 from Homo sapiens (Human).